Reading from the N-terminus, the 710-residue chain is Polyribonucleotide nucleotidyltransferase (710 aa).

Residues Asp488 and Asp494 each coordinate Mg(2+). Residues 555–615 (PVIKVISIDP…EKVDAAIEQI (61 aa)) form the KH domain. Residues 625–688 (GDVFSGKVTR…NLGRLQLEEF (64 aa)) form the S1 motif domain. Residues 688–710 (FSDSPDHKHGEKRSFKRHRKNDN) are disordered. A compositionally biased stretch (basic and acidic residues) spans 691–700 (SPDHKHGEKR). A compositionally biased stretch (basic residues) spans 701–710 (SFKRHRKNDN).

It belongs to the polyribonucleotide nucleotidyltransferase family. Mg(2+) is required as a cofactor.

The protein localises to the cytoplasm. It carries out the reaction RNA(n+1) + phosphate = RNA(n) + a ribonucleoside 5'-diphosphate. In terms of biological role, involved in mRNA degradation. Catalyzes the phosphorolysis of single-stranded polyribonucleotides processively in the 3'- to 5'-direction. The protein is Polyribonucleotide nucleotidyltransferase of Pseudothermotoga lettingae (strain ATCC BAA-301 / DSM 14385 / NBRC 107922 / TMO) (Thermotoga lettingae).